A 385-amino-acid chain; its full sequence is Chaperone protein DnaJ (385 aa).

The 66-residue stretch at 5-70 folds into the J domain; the sequence is DYYEVLGVSK…ERKAAYDRYG (66 aa). Residues 143-221 form a CR-type zinc finger; that stretch reads GLHKTINVPT…CNGHGRVEKD (79 aa). Zn(2+)-binding residues include Cys156, Cys159, Cys173, Cys176, Cys195, Cys198, Cys209, and Cys212. CXXCXGXG motif repeat units follow at residues 156 to 163, 173 to 180, 195 to 202, and 209 to 216; these read CTSCEGTG, CPTCSGMG, CPTCSGLG, and CKTCNGHG.

It belongs to the DnaJ family. In terms of assembly, homodimer. Zn(2+) serves as cofactor.

The protein localises to the cytoplasm. Participates actively in the response to hyperosmotic and heat shock by preventing the aggregation of stress-denatured proteins and by disaggregating proteins, also in an autonomous, DnaK-independent fashion. Unfolded proteins bind initially to DnaJ; upon interaction with the DnaJ-bound protein, DnaK hydrolyzes its bound ATP, resulting in the formation of a stable complex. GrpE releases ADP from DnaK; ATP binding to DnaK triggers the release of the substrate protein, thus completing the reaction cycle. Several rounds of ATP-dependent interactions between DnaJ, DnaK and GrpE are required for fully efficient folding. Also involved, together with DnaK and GrpE, in the DNA replication of plasmids through activation of initiation proteins. This Ruegeria sp. (strain TM1040) (Silicibacter sp.) protein is Chaperone protein DnaJ.